We begin with the raw amino-acid sequence, 481 residues long: Alpha-L-arabinofuranosidase 43 (481 aa).

A signal peptide spans 1-19; sequence MRFSVFTAAIAAAFSACCA. 3 N-linked (GlcNAc...) asparagine glycosylation sites follow: asparagine 158, asparagine 176, and asparagine 365.

It belongs to the glycosyl hydrolase 43 family.

Its subcellular location is the secreted. It catalyses the reaction Hydrolysis of terminal non-reducing alpha-L-arabinofuranoside residues in alpha-L-arabinosides.. With respect to regulation, activity is significantly inhibited by SDS and partially inhibited by Ag(+), Fe(3+) and beta-mercaptoethanol. Alpha-L-arabinofuranosidase specific for the cleavage of alpha-1,3-linkage. Shows high activity against 4-nitrophenyl alpha-L-arabinofuranoside, debranched arabinan, and sugar beet arabinan. This chain is Alpha-L-arabinofuranosidase 43, found in Humicola insolens (Soft-rot fungus).